Reading from the N-terminus, the 325-residue chain is MTKSQQKVSSIEKLSNQEGIISALAFDQRGALKRMMAEHQSETPTVEQIEQLKVLVSEELTQYASSILLDPEYGLPASDARNNDCGLLLAYEKTGYDVNAKGRLPDCLVEWSAKRLKEQGANAVKFLLYYDVDDTEEINIQKKAYIERIGSECVAEDIPFFLEVLTYDDNIPDNKSAEFAKVKPRKVNEAMKLFSEDCFNVDVLKVEVPVNMNFVEGFSEGEVVYTKEEAAQHFRDQDAATHLPYIYLSAGVSAELFQDTLKFAHDSGAQFNGVLCGRATWSGAVKVYIEEGEQAAREWLRTVGFKNIDDLNTVLKTTATSWKNK.

This sequence belongs to the aldolase LacD family.

It catalyses the reaction D-tagatofuranose 1,6-bisphosphate = D-glyceraldehyde 3-phosphate + dihydroxyacetone phosphate. It participates in carbohydrate metabolism; D-tagatose 6-phosphate degradation; D-glyceraldehyde 3-phosphate and glycerone phosphate from D-tagatose 6-phosphate: step 2/2. The chain is Tagatose 1,6-diphosphate aldolase from Staphylococcus epidermidis (strain ATCC 12228 / FDA PCI 1200).